Here is a 475-residue protein sequence, read N- to C-terminus: 3-isopropylmalate dehydratase large subunit (475 aa).

[4Fe-4S] cluster is bound by residues cysteine 353, cysteine 414, and cysteine 417.

The protein belongs to the aconitase/IPM isomerase family. LeuC type 1 subfamily. As to quaternary structure, heterodimer of LeuC and LeuD. [4Fe-4S] cluster serves as cofactor.

The catalysed reaction is (2R,3S)-3-isopropylmalate = (2S)-2-isopropylmalate. It functions in the pathway amino-acid biosynthesis; L-leucine biosynthesis; L-leucine from 3-methyl-2-oxobutanoate: step 2/4. Its function is as follows. Catalyzes the isomerization between 2-isopropylmalate and 3-isopropylmalate, via the formation of 2-isopropylmaleate. The sequence is that of 3-isopropylmalate dehydratase large subunit from Stutzerimonas stutzeri (strain A1501) (Pseudomonas stutzeri).